The sequence spans 253 residues: 5'-nucleotidase SurE (253 aa).

The a divalent metal cation site is built by D8, D9, S39, and N92.

Belongs to the SurE nucleotidase family. A divalent metal cation is required as a cofactor.

It is found in the cytoplasm. The catalysed reaction is a ribonucleoside 5'-phosphate + H2O = a ribonucleoside + phosphate. Its function is as follows. Nucleotidase that shows phosphatase activity on nucleoside 5'-monophosphates. The polypeptide is 5'-nucleotidase SurE (Burkholderia pseudomallei (strain 668)).